A 329-amino-acid polypeptide reads, in one-letter code: DNA-directed RNA polymerase subunit alpha (329 aa).

The alpha N-terminal domain (alpha-NTD) stretch occupies residues 1–234; it reads MQGSVTEFLK…EQLDAFVELR (234 aa). The alpha C-terminal domain (alpha-CTD) stretch occupies residues 248–329; sequence FDPILLRPVD…WPPASLADDL (82 aa).

This sequence belongs to the RNA polymerase alpha chain family. In terms of assembly, homodimer. The RNAP catalytic core consists of 2 alpha, 1 beta, 1 beta' and 1 omega subunit. When a sigma factor is associated with the core the holoenzyme is formed, which can initiate transcription.

The enzyme catalyses RNA(n) + a ribonucleoside 5'-triphosphate = RNA(n+1) + diphosphate. Its function is as follows. DNA-dependent RNA polymerase catalyzes the transcription of DNA into RNA using the four ribonucleoside triphosphates as substrates. The sequence is that of DNA-directed RNA polymerase subunit alpha from Shewanella sp. (strain ANA-3).